The sequence spans 235 residues: Phosphoribosylaminoimidazole-succinocarboxamide synthase (235 aa).

It belongs to the SAICAR synthetase family.

The enzyme catalyses 5-amino-1-(5-phospho-D-ribosyl)imidazole-4-carboxylate + L-aspartate + ATP = (2S)-2-[5-amino-1-(5-phospho-beta-D-ribosyl)imidazole-4-carboxamido]succinate + ADP + phosphate + 2 H(+). Its pathway is purine metabolism; IMP biosynthesis via de novo pathway; 5-amino-1-(5-phospho-D-ribosyl)imidazole-4-carboxamide from 5-amino-1-(5-phospho-D-ribosyl)imidazole-4-carboxylate: step 1/2. The polypeptide is Phosphoribosylaminoimidazole-succinocarboxamide synthase (Chlorobaculum tepidum (strain ATCC 49652 / DSM 12025 / NBRC 103806 / TLS) (Chlorobium tepidum)).